Consider the following 83-residue polypeptide: Small ribosomal subunit protein uS17 (83 aa).

This sequence belongs to the universal ribosomal protein uS17 family. As to quaternary structure, part of the 30S ribosomal subunit.

One of the primary rRNA binding proteins, it binds specifically to the 5'-end of 16S ribosomal RNA. This chain is Small ribosomal subunit protein uS17, found in Nitratiruptor sp. (strain SB155-2).